The chain runs to 341 residues: Hydrogenase expression/formation protein HupE (341 aa).

Belongs to the HypE family.

May be involved in the maturation of the NifE hydrogenase. The polypeptide is Hydrogenase expression/formation protein HupE (hupE) (Azotobacter chroococcum mcd 1).